We begin with the raw amino-acid sequence, 275 residues long: Biotin synthase (275 aa).

The Radical SAM core domain occupies 1–217 (MLCAICNVSS…DTAKTLPQCR (217 aa)). Residues Cys13, Cys17, and Cys20 each coordinate [4Fe-4S] cluster. [2Fe-2S] cluster contacts are provided by Cys57, Cys92, Cys150, and Arg217.

It belongs to the radical SAM superfamily. Biotin synthase family. In terms of assembly, homodimer. Requires [4Fe-4S] cluster as cofactor. [2Fe-2S] cluster is required as a cofactor.

It carries out the reaction (4R,5S)-dethiobiotin + (sulfur carrier)-SH + 2 reduced [2Fe-2S]-[ferredoxin] + 2 S-adenosyl-L-methionine = (sulfur carrier)-H + biotin + 2 5'-deoxyadenosine + 2 L-methionine + 2 oxidized [2Fe-2S]-[ferredoxin]. It participates in cofactor biosynthesis; biotin biosynthesis; biotin from 7,8-diaminononanoate: step 2/2. In terms of biological role, catalyzes the conversion of dethiobiotin (DTB) to biotin by the insertion of a sulfur atom into dethiobiotin via a radical-based mechanism. This chain is Biotin synthase, found in Campylobacter fetus subsp. fetus (strain 82-40).